A 139-amino-acid polypeptide reads, in one-letter code: Nucleoside diphosphate kinase (139 aa).

ATP is bound by residues Lys11, Phe59, Arg87, Thr93, Arg104, and Asn114. The Pros-phosphohistidine intermediate role is filled by His117.

Belongs to the NDK family. Homotetramer. The cofactor is Mg(2+).

It is found in the cytoplasm. It carries out the reaction a 2'-deoxyribonucleoside 5'-diphosphate + ATP = a 2'-deoxyribonucleoside 5'-triphosphate + ADP. The catalysed reaction is a ribonucleoside 5'-diphosphate + ATP = a ribonucleoside 5'-triphosphate + ADP. Functionally, major role in the synthesis of nucleoside triphosphates other than ATP. The ATP gamma phosphate is transferred to the NDP beta phosphate via a ping-pong mechanism, using a phosphorylated active-site intermediate. This is Nucleoside diphosphate kinase from Flavobacterium johnsoniae (strain ATCC 17061 / DSM 2064 / JCM 8514 / BCRC 14874 / CCUG 350202 / NBRC 14942 / NCIMB 11054 / UW101) (Cytophaga johnsonae).